Here is a 204-residue protein sequence, read N- to C-terminus: Large ribosomal subunit protein eL15 (204 aa).

Belongs to the eukaryotic ribosomal protein eL15 family. As to quaternary structure, component of the large ribosomal subunit.

The protein localises to the cytoplasm. Component of the large ribosomal subunit. The ribosome is a large ribonucleoprotein complex responsible for the synthesis of proteins in the cell. The chain is Large ribosomal subunit protein eL15 (rpl15) from Megalobrama amblycephala (Chinese blunt snout bream).